A 92-amino-acid polypeptide reads, in one-letter code: Elongation factor 1-beta (92 aa).

The protein belongs to the EF-1-beta/EF-1-delta family.

In terms of biological role, promotes the exchange of GDP for GTP in EF-1-alpha/GDP, thus allowing the regeneration of EF-1-alpha/GTP that could then be used to form the ternary complex EF-1-alpha/GTP/AAtRNA. The sequence is that of Elongation factor 1-beta (ef1b) from Pyrobaculum aerophilum (strain ATCC 51768 / DSM 7523 / JCM 9630 / CIP 104966 / NBRC 100827 / IM2).